A 212-amino-acid chain; its full sequence is ATP-dependent Clp protease proteolytic subunit (212 aa).

Catalysis depends on serine 114, which acts as the Nucleophile. Residue histidine 139 is part of the active site.

Belongs to the peptidase S14 family. As to quaternary structure, fourteen ClpP subunits assemble into 2 heptameric rings which stack back to back to give a disk-like structure with a central cavity, resembling the structure of eukaryotic proteasomes.

It is found in the cytoplasm. The enzyme catalyses Hydrolysis of proteins to small peptides in the presence of ATP and magnesium. alpha-casein is the usual test substrate. In the absence of ATP, only oligopeptides shorter than five residues are hydrolyzed (such as succinyl-Leu-Tyr-|-NHMec, and Leu-Tyr-Leu-|-Tyr-Trp, in which cleavage of the -Tyr-|-Leu- and -Tyr-|-Trp bonds also occurs).. Cleaves peptides in various proteins in a process that requires ATP hydrolysis. Has a chymotrypsin-like activity. Plays a major role in the degradation of misfolded proteins. This chain is ATP-dependent Clp protease proteolytic subunit, found in Aromatoleum aromaticum (strain DSM 19018 / LMG 30748 / EbN1) (Azoarcus sp. (strain EbN1)).